Consider the following 109-residue polypeptide: MSRISSLQDPFLNALRKEKVSVSVYLVNGIKLQGQVEAFDQFCIVLRNTVNQMVYKHAISTIVPAKSVRMVYSSFNPYHQNSNDEQDENVDDIHSDDLEIQENEGNIHE.

Residues 9-68 (DPFLNALRKEKVSVSVYLVNGIKLQGQVEAFDQFCIVLRNTVNQMVYKHAISTIVPAKSV) form the Sm domain. The tract at residues 77–109 (PYHQNSNDEQDENVDDIHSDDLEIQENEGNIHE) is disordered.

Belongs to the Hfq family. As to quaternary structure, homohexamer.

RNA chaperone that binds small regulatory RNA (sRNAs) and mRNAs to facilitate mRNA translational regulation in response to envelope stress, environmental stress and changes in metabolite concentrations. Also binds with high specificity to tRNAs. This is RNA-binding protein Hfq from Francisella tularensis subsp. holarctica (strain FTNF002-00 / FTA).